Here is a 304-residue protein sequence, read N- to C-terminus: Acetyl-coenzyme A carboxylase carboxyl transferase subunit beta (304 aa).

The CoA carboxyltransferase N-terminal domain maps to Val-25–Thr-294. Residues Cys-29, Cys-32, Cys-48, and Cys-51 each coordinate Zn(2+). The segment at Cys-29–Cys-51 adopts a C4-type zinc-finger fold.

The protein belongs to the AccD/PCCB family. Acetyl-CoA carboxylase is a heterohexamer composed of biotin carboxyl carrier protein (AccB), biotin carboxylase (AccC) and two subunits each of ACCase subunit alpha (AccA) and ACCase subunit beta (AccD). Zn(2+) serves as cofactor.

Its subcellular location is the cytoplasm. It catalyses the reaction N(6)-carboxybiotinyl-L-lysyl-[protein] + acetyl-CoA = N(6)-biotinyl-L-lysyl-[protein] + malonyl-CoA. It participates in lipid metabolism; malonyl-CoA biosynthesis; malonyl-CoA from acetyl-CoA: step 1/1. Its function is as follows. Component of the acetyl coenzyme A carboxylase (ACC) complex. Biotin carboxylase (BC) catalyzes the carboxylation of biotin on its carrier protein (BCCP) and then the CO(2) group is transferred by the transcarboxylase to acetyl-CoA to form malonyl-CoA. The protein is Acetyl-coenzyme A carboxylase carboxyl transferase subunit beta of Yersinia pseudotuberculosis serotype O:1b (strain IP 31758).